A 418-amino-acid chain; its full sequence is UDP-N-acetylglucosamine 1-carboxyvinyltransferase (418 aa).

Position 22 to 23 (22 to 23) interacts with phosphoenolpyruvate; the sequence is KN. Residue R93 coordinates UDP-N-acetyl-alpha-D-glucosamine. C117 functions as the Proton donor in the catalytic mechanism. C117 carries the 2-(S-cysteinyl)pyruvic acid O-phosphothioketal modification. Positions 306 and 328 each coordinate UDP-N-acetyl-alpha-D-glucosamine.

It belongs to the EPSP synthase family. MurA subfamily.

It is found in the cytoplasm. It catalyses the reaction phosphoenolpyruvate + UDP-N-acetyl-alpha-D-glucosamine = UDP-N-acetyl-3-O-(1-carboxyvinyl)-alpha-D-glucosamine + phosphate. It functions in the pathway cell wall biogenesis; peptidoglycan biosynthesis. Its function is as follows. Cell wall formation. Adds enolpyruvyl to UDP-N-acetylglucosamine. The protein is UDP-N-acetylglucosamine 1-carboxyvinyltransferase of Hydrogenovibrio crunogenus (strain DSM 25203 / XCL-2) (Thiomicrospira crunogena).